The primary structure comprises 101 residues: Integration host factor subunit beta (101 aa).

It belongs to the bacterial histone-like protein family. As to quaternary structure, heterodimer of an alpha and a beta chain.

Its function is as follows. This protein is one of the two subunits of integration host factor, a specific DNA-binding protein that functions in genetic recombination as well as in transcriptional and translational control. The chain is Integration host factor subunit beta from Janthinobacterium sp. (strain Marseille) (Minibacterium massiliensis).